Reading from the N-terminus, the 199-residue chain is Adenosylcobinamide-GDP ribazoletransferase (199 aa).

2 helical membrane passes run 2–22 (LAGG…VFAV) and 61–81 (IAAV…VAAL).

This sequence belongs to the CobS family. Mg(2+) serves as cofactor.

It localises to the cell membrane. It carries out the reaction alpha-ribazole + adenosylcob(III)inamide-GDP = adenosylcob(III)alamin + GMP + H(+). The enzyme catalyses alpha-ribazole 5'-phosphate + adenosylcob(III)inamide-GDP = adenosylcob(III)alamin 5'-phosphate + GMP + H(+). The protein operates within cofactor biosynthesis; adenosylcobalamin biosynthesis; adenosylcobalamin from cob(II)yrinate a,c-diamide: step 7/7. In terms of biological role, joins adenosylcobinamide-GDP and alpha-ribazole to generate adenosylcobalamin (Ado-cobalamin). Also synthesizes adenosylcobalamin 5'-phosphate from adenosylcobinamide-GDP and alpha-ribazole 5'-phosphate. This is Adenosylcobinamide-GDP ribazoletransferase from Halobacterium salinarum (strain ATCC 700922 / JCM 11081 / NRC-1) (Halobacterium halobium).